A 371-amino-acid polypeptide reads, in one-letter code: tRNA-specific 2-thiouridylase MnmA (371 aa).

Residues 12-19 and Met38 each bind ATP; that span reads GMSGGVDS. The interval 98-100 is interaction with target base in tRNA; it reads NPD. Cys103 functions as the Nucleophile in the catalytic mechanism. Cysteines 103 and 200 form a disulfide. Gly128 lines the ATP pocket. Residues 150–152 are interaction with tRNA; that stretch reads KDQ. Residue Cys200 is the Cysteine persulfide intermediate of the active site. The segment at 312 to 313 is interaction with tRNA; it reads RY.

This sequence belongs to the MnmA/TRMU family. In terms of assembly, interacts with TusE.

The protein resides in the cytoplasm. It carries out the reaction S-sulfanyl-L-cysteinyl-[protein] + uridine(34) in tRNA + AH2 + ATP = 2-thiouridine(34) in tRNA + L-cysteinyl-[protein] + A + AMP + diphosphate + H(+). Functionally, catalyzes the 2-thiolation of uridine at the wobble position (U34) of tRNA(Lys), tRNA(Glu) and tRNA(Gln), leading to the formation of s(2)U34, the first step of tRNA-mnm(5)s(2)U34 synthesis. Sulfur is provided by IscS, via a sulfur-relay system. Binds ATP and its substrate tRNAs. The sequence is that of tRNA-specific 2-thiouridylase MnmA from Yersinia pseudotuberculosis serotype O:1b (strain IP 31758).